Reading from the N-terminus, the 556-residue chain is MANGLFTYVAISLFTIGPLLALFIPFVWRLVGSSLGWYLRRKTDGRRCHILEVVEADERKYRDSKSAKGRKAEKEDRDTFNNTEATGTSDGKVYDKDWDGIVGFFHPFCNAGGGGERVLWAAIRATQKRWPKAKCVVYTGDHDVSKEAILSRVEQRFNIHLHPPTVNFLYLSTRRWVLASTWPYFTLAGQSFGSLIMAWDAFSLLVPDIFVDTMGYAFALGFSRFLFRDVPTAAYVHYPTISTDMLESLDPASAVGSQGVNAGKGTGAKGRAKKIYWQLFARLYSLMGASVDVVMTNSTWTQAHIEKLWGPVRNLTGAVPGIKSKVNPIAVVYPPVAVEELEQEVEVSPESEKRRENVLLYIAQFRPEKNHQLIVQAFAEFLKSGSEAARDAKLVLVGSVRDDYDSKRVYKLRLLVNELHIKDRVEFHLDASWPDILEWLRRASVGVNGMWNEHFGIGVVEYQAAGLISVVHDSGGPKLDIVVEVDGEPTGFHATTSKEFAEGFEKALSLPNPYAVRLRARKSAKRFTEEEFARRWIEQLEKCVAIKAVEKPKSRQ.

The Lumenal segment spans residues 1-7 (MANGLFT). A helical transmembrane segment spans residues 8-28 (YVAISLFTIGPLLALFIPFVW). Residues 29 to 184 (RLVGSSLGWY…RWVLASTWPY (156 aa)) are Cytoplasmic-facing. The span at 64 to 79 (SKSAKGRKAEKEDRDT) shows a compositional bias: basic and acidic residues. The interval 64–86 (SKSAKGRKAEKEDRDTFNNTEAT) is disordered. The helical intramembrane region spans 185–205 (FTLAGQSFGSLIMAWDAFSLL). Residues 206–454 (VPDIFVDTMG…VGVNGMWNEH (249 aa)) lie on the Cytoplasmic side of the membrane. Residues 455–475 (FGIGVVEYQAAGLISVVHDSG) constitute an intramembrane region (helical). The Cytoplasmic segment spans residues 476–556 (GPKLDIVVEV…KAVEKPKSRQ (81 aa)).

It belongs to the glycosyltransferase group 1 family. Glycosyltransferase 4 subfamily.

The protein resides in the endoplasmic reticulum membrane. It catalyses the reaction an alpha-D-Man-(1-&gt;3)-[alpha-D-Man-(1-&gt;6)]-beta-D-Man-(1-&gt;4)-beta-D-GlcNAc-(1-&gt;4)-alpha-D-GlcNAc-diphospho-di-trans,poly-cis-dolichol + 2 GDP-alpha-D-mannose = an alpha-D-Man-(1-&gt;2)-alpha-D-Man-(1-&gt;2)-alpha-D-Man-(1-&gt;3)-[alpha-D-Man-(1-&gt;6)]-beta-D-Man-(1-&gt;4)-beta-D-GlcNAc-(1-&gt;4)-alpha-D-GlcNAc-diphospho-di-trans,poly-cis-dolichol + 2 GDP + 2 H(+). It participates in protein modification; protein glycosylation. Its function is as follows. GDP-Man:Man(3)GlcNAc(2)-PP-Dol alpha-1,2-mannosyltransferase that operates in the biosynthetic pathway of dolichol-linked oligosaccharides, the glycan precursors employed in protein asparagine (N)-glycosylation. The assembly of dolichol-linked oligosaccharides begins on the cytosolic side of the endoplasmic reticulum membrane and finishes in its lumen. The sequential addition of sugars to dolichol pyrophosphate produces dolichol-linked oligosaccharides containing fourteen sugars, including two GlcNAcs, nine mannoses and three glucoses. Once assembled, the oligosaccharide is transferred from the lipid to nascent proteins by oligosaccharyltransferases. Catalyzes, on the cytoplasmic face of the endoplasmic reticulum, the addition of the fourth and fifth mannose residues to the dolichol-linked oligosaccharide chain, to produce Man(5)GlcNAc(2)-PP-dolichol core oligosaccharide. In Neurospora crassa (strain ATCC 24698 / 74-OR23-1A / CBS 708.71 / DSM 1257 / FGSC 987), this protein is GDP-Man:Man(3)GlcNAc(2)-PP-Dol alpha-1,2-mannosyltransferase (alg-11).